Reading from the N-terminus, the 606-residue chain is Pentatricopeptide repeat-containing protein At1g31920 (606 aa).

PPR repeat units follow at residues 96-130 (CTFD…GNEP), 131-165 (DNFT…GLEA), 166-200 (DVFV…TAAS), 201-227 (WSSM…MCSE), 233-263 (EESG…LLRN), 268-298 (NIIV…MEKR), 299-333 (NNLT…GLEP), 334-368 (DHVV…GKVE), and 370-404 (TAEH…KNDV). A type E motif region spans residues 405–480 (IWRTFLSQCR…TPGFSIVELK (76 aa)). A type E(+) motif region spans residues 481–511 (GKTHRFVSQDRSHPKCKEIYKMLHQMEWQLK). The type DYW motif stretch occupies residues 512–606 (FEGYSPDLTQ…GGTCSCKDYW (95 aa)).

This sequence belongs to the PPR family. PCMP-H subfamily.

This is Pentatricopeptide repeat-containing protein At1g31920 (PCMP-H11) from Arabidopsis thaliana (Mouse-ear cress).